Reading from the N-terminus, the 130-residue chain is Small ribosomal subunit protein uS8 (130 aa).

This sequence belongs to the universal ribosomal protein uS8 family. As to quaternary structure, part of the 30S ribosomal subunit. Contacts proteins S5 and S12.

Its function is as follows. One of the primary rRNA binding proteins, it binds directly to 16S rRNA central domain where it helps coordinate assembly of the platform of the 30S subunit. This chain is Small ribosomal subunit protein uS8, found in Shewanella piezotolerans (strain WP3 / JCM 13877).